We begin with the raw amino-acid sequence, 307 residues long: Salivary glue protein Sgs-3 (307 aa).

The N-terminal stretch at 1–23 (MKLTIATALASILLIGSANVANC) is a signal peptide. The interval 56–257 (APPTQQSTTQ…PTTTKPTTPK (202 aa)) is disordered.

O-glycosylated by Pgnat9 in salivary glands. Specifically expressed in the salivary gland.

The protein localises to the secreted. This chain is Salivary glue protein Sgs-3, found in Drosophila melanogaster (Fruit fly).